Consider the following 65-residue polypeptide: Precursor peptide TigB (65 aa).

TIGSVS motif repeat units follow at residues 16 to 21 (TIGSVS), 23 to 28 (TIGSVS), 33 to 38 (TIGSVS), 40 to 45 (TIGSVS), 47 to 52 (TIGSVS), and 54 to 59 (TIGSVS). A methylcyclopropylglycine mark is found at Ile17, Ile24, Ile34, Ile41, Ile48, and Ile55.

Is subject to maturation by TigE, that catalyzes the formation of methylcyclopropylglycine (mCPG) residues from isoleucine residues residing in the repeating TIGSVS motifs.

Its function is as follows. Precursor peptide which undergoes post-translational modifications by tailoring enzymes, leading to the mature natural product. This chain is Precursor peptide TigB, found in Paramaledivibacter caminithermalis (strain DSM 15212 / CIP 107654 / DViRD3) (Clostridium caminithermale).